Consider the following 102-residue polypeptide: Large ribosomal subunit protein bL21 (102 aa).

It belongs to the bacterial ribosomal protein bL21 family. In terms of assembly, part of the 50S ribosomal subunit. Contacts protein L20.

In terms of biological role, this protein binds to 23S rRNA in the presence of protein L20. This Staphylococcus aureus protein is Large ribosomal subunit protein bL21.